A 356-amino-acid chain; its full sequence is uncharacterized protein (356 aa).

The next 3 membrane-spanning stretches (helical) occupy residues 258 to 275 (SALQAAAAVIEFVAVFYY), 290 to 312 (PHWLSFSLLAAFTFTVVVYTEAL), and 325 to 347 (LVLLTLTLAILVILMATLPTLFS).

It localises to the cell membrane. This is an uncharacterized protein from Archaeoglobus fulgidus (strain ATCC 49558 / DSM 4304 / JCM 9628 / NBRC 100126 / VC-16).